We begin with the raw amino-acid sequence, 398 residues long: Protochlorophyllide reductase, chloroplastic (398 aa).

The transit peptide at 1 to 64 (MALQAASLVS…NQQIGAIRAQ (64 aa)) directs the protein to the chloroplast.

Belongs to the short-chain dehydrogenases/reductases (SDR) family. POR subfamily.

The protein resides in the plastid. Its subcellular location is the chloroplast. The enzyme catalyses chlorophyllide a + NADP(+) = protochlorophyllide a + NADPH + H(+). It participates in porphyrin-containing compound metabolism; chlorophyll biosynthesis. Phototransformation of protochlorophyllide (Pchlide) to chlorophyllide (Chlide). This is Protochlorophyllide reductase, chloroplastic (PORA) from Cucumis sativus (Cucumber).